A 353-amino-acid polypeptide reads, in one-letter code: uncharacterized protein (353 aa).

This is an uncharacterized protein from Methanocaldococcus jannaschii (strain ATCC 43067 / DSM 2661 / JAL-1 / JCM 10045 / NBRC 100440) (Methanococcus jannaschii).